Here is a 409-residue protein sequence, read N- to C-terminus: Tyrosine--tRNA ligase (409 aa).

Tyr35 provides a ligand contact to L-tyrosine. The 'HIGH' region signature appears at 40–49; it reads PTGSSLHVGH. The L-tyrosine site is built by Tyr168 and Gln172. The 'KMSKS' region motif lies at 228–232; that stretch reads KMGKT. Lys231 contributes to the ATP binding site. Residues 339–404 enclose the S4 RNA-binding domain; sequence IKVTDLFVQV…AGKKRVVRIV (66 aa).

It belongs to the class-I aminoacyl-tRNA synthetase family. TyrS type 1 subfamily. In terms of assembly, homodimer.

The protein resides in the cytoplasm. The enzyme catalyses tRNA(Tyr) + L-tyrosine + ATP = L-tyrosyl-tRNA(Tyr) + AMP + diphosphate + H(+). Functionally, catalyzes the attachment of tyrosine to tRNA(Tyr) in a two-step reaction: tyrosine is first activated by ATP to form Tyr-AMP and then transferred to the acceptor end of tRNA(Tyr). The sequence is that of Tyrosine--tRNA ligase from Treponema pallidum (strain Nichols).